An 881-amino-acid polypeptide reads, in one-letter code: DNA mismatch repair protein MutS (881 aa).

632–639 is an ATP binding site; that stretch reads GPNMGGKS.

It belongs to the DNA mismatch repair MutS family.

In terms of biological role, this protein is involved in the repair of mismatches in DNA. It is possible that it carries out the mismatch recognition step. This protein has a weak ATPase activity. This chain is DNA mismatch repair protein MutS, found in Acinetobacter baylyi (strain ATCC 33305 / BD413 / ADP1).